Reading from the N-terminus, the 1436-residue chain is Probable deoxyribonuclease RhsB (1436 aa).

The tract at residues 16-42 (HAGNRPNPPADRPQPCQGKPPTSPGKT) is disordered. 2 helical membrane-spanning segments follow: residues 48–68 (FLGA…VAAA) and 70–90 (VFLV…LAVF). 5 YD repeats span residues 486 to 521 (YNTA…CADG), 569 to 605 (YDEV…DGSG), 612 to 647 (YDDA…GPDA), 766 to 799 (DLLT…PDGS), and 847 to 879 (YDAR…VSSA).

The protein belongs to the RHS/WapA nuclease family.

It localises to the membrane. Functionally, toxic component of a toxin-immunity protein module, which functions as a cellular contact-dependent growth inhibition (CDI) system. This protein may be a nuclease that is specifically inhibited by its cognate immunity protein RhsBI. Upon expression of the C-terminus (residues 1284-1436) in E.coli growth is inhibited, cells elongate, nucleoids condense and plasmid DNA is degraded; these effects are blocked specifically by cognate immunity protein RshIB. Cell contact is necessary for growth inhibition. The sequence is that of Probable deoxyribonuclease RhsB (rhsB) from Dickeya dadantii (strain 3937) (Erwinia chrysanthemi (strain 3937)).